The following is a 404-amino-acid chain: Serine/threonine transporter SstT (404 aa).

The next 9 helical transmembrane spans lie at 17–37, 39–59, 75–95, 138–158, 179–199, 212–232, 287–307, 319–339, and 354–374; these read IGIGVVIGLLLGILLPDVTAI, ILGQLFVGALKAIAPLLVFAL, MTLIIVLYLLGTFLAALVAVI, ALATANYIGVLAWALIFGLAL, IVVWIINVAPIGIMGLVFSTV, LLILVLVGTMLFVALVVNPLL, IPLGAMINMGGAAITINVLTL, FLTALLLSVVAAISACGASGV, and FGISSDLAMQVVGVGFIVGVI.

This sequence belongs to the dicarboxylate/amino acid:cation symporter (DAACS) (TC 2.A.23) family.

Its subcellular location is the cell membrane. It carries out the reaction L-serine(in) + Na(+)(in) = L-serine(out) + Na(+)(out). The enzyme catalyses L-threonine(in) + Na(+)(in) = L-threonine(out) + Na(+)(out). In terms of biological role, involved in the import of serine and threonine into the cell, with the concomitant import of sodium (symport system). In Streptococcus equi subsp. equi (strain 4047), this protein is Serine/threonine transporter SstT.